The sequence spans 430 residues: Histidine--tRNA ligase (430 aa).

It belongs to the class-II aminoacyl-tRNA synthetase family. Homodimer.

The protein resides in the cytoplasm. The enzyme catalyses tRNA(His) + L-histidine + ATP = L-histidyl-tRNA(His) + AMP + diphosphate + H(+). This is Histidine--tRNA ligase from Lactococcus lactis subsp. cremoris (strain SK11).